We begin with the raw amino-acid sequence, 351 residues long: Putative NBPF family member NBPF5 (351 aa).

Coiled coils occupy residues serine 10–leucine 43 and aspartate 69–glutamate 115. Residues histidine 157 to asparagine 285 form a disordered region. The segment covering glutamate 165 to glutamate 179 has biased composition (acidic residues). The Olduvai domain maps to glutamate 174 to proline 261. A compositionally biased stretch (basic and acidic residues) spans glutamate 192–proline 202. Low complexity predominate over residues serine 214–histidine 226. 2 stretches are compositionally biased toward basic and acidic residues: residues threonine 232–aspartate 251 and glutamine 264–lysine 273.

This sequence belongs to the NBPF family. Expressed in brain and medulla.

Its subcellular location is the cytoplasm. This Homo sapiens (Human) protein is Putative NBPF family member NBPF5.